The sequence spans 405 residues: MDSWSYGRSVFMSNETLLPCDTFAKNRRFEQRLSNNDDVLISDMAGNSNGFSAVSITKVVPEEEDEENISSSSKFSSQELNRIDFKLRSFLDLGNDDDDTSSRGFALPSKKSRASNLCSQNPLCQVYGCSKDLSSSKDYHKRHRVCEAHSKTSVVIVNGLEQRFCQQCSRFHFLSEFDDGKRSCRRRLAGHNERRRKPAFYFLPGKRHKLLRTSQDVVGNKFLENSSLVLPESFPGSLLYRVIDEDDHRTSRLVSFKDEPTCSMFPTNEQNSSRTYESKPAIYSTEVSSIWDLHETAASRSTRALSLLSAQSQQHLSKFPNTTFSITQPNQNLNHSSSTDYHQMEQPLWIDPGKTNSAGSSSCKGKGTSTVDLLQLSSHLQRIEQQRNYTGDVKQEYNELYFPGS.

An SBP-type zinc finger spans residues 121–198; sequence NPLCQVYGCS…AGHNERRRKP (78 aa). Residues cysteine 124, cysteine 129, cysteine 146, histidine 149, cysteine 165, cysteine 168, histidine 172, and cysteine 184 each coordinate Zn(2+). The Bipartite nuclear localization signal signature appears at 181-197; the sequence is KRSCRRRLAGHNERRRK.

Zn(2+) serves as cofactor.

It is found in the nucleus. Its function is as follows. Trans-acting factor that binds specifically to the consensus nucleotide sequence 5'-TNCGTACAA-3'. The polypeptide is Squamosa promoter-binding-like protein 6 (SPL6) (Arabidopsis thaliana (Mouse-ear cress)).